The sequence spans 344 residues: Lipase chaperone (344 aa).

Residues 14 to 34 traverse the membrane as a helical segment; that stretch reads AVVYGVVGLAAIAGVAMWSGA.

It belongs to the lipase chaperone family.

The protein resides in the cell inner membrane. In terms of biological role, may be involved in the folding of the extracellular lipase during its passage through the periplasm. This is Lipase chaperone (lifO) from Burkholderia cepacia (Pseudomonas cepacia).